Here is a 231-residue protein sequence, read N- to C-terminus: uncharacterized protein (231 aa).

Residues 86-106 traverse the membrane as a helical segment; that stretch reads LIILFVIGLIITIIGLLMYEP.

It is found in the membrane. This is an uncharacterized protein from Methanocaldococcus jannaschii (strain ATCC 43067 / DSM 2661 / JAL-1 / JCM 10045 / NBRC 100440) (Methanococcus jannaschii).